A 189-amino-acid polypeptide reads, in one-letter code: Pyridoxal 5'-phosphate synthase subunit PdxT (189 aa).

Residue 47–49 (GES) participates in L-glutamine binding. The active-site Nucleophile is Cys-79. Residues Arg-105 and 132-133 (IR) each bind L-glutamine. Residues His-168 and Glu-170 each act as charge relay system in the active site.

This sequence belongs to the glutaminase PdxT/SNO family. In terms of assembly, in the presence of PdxS, forms a dodecamer of heterodimers. Only shows activity in the heterodimer.

It carries out the reaction aldehydo-D-ribose 5-phosphate + D-glyceraldehyde 3-phosphate + L-glutamine = pyridoxal 5'-phosphate + L-glutamate + phosphate + 3 H2O + H(+). It catalyses the reaction L-glutamine + H2O = L-glutamate + NH4(+). Its pathway is cofactor biosynthesis; pyridoxal 5'-phosphate biosynthesis. Catalyzes the hydrolysis of glutamine to glutamate and ammonia as part of the biosynthesis of pyridoxal 5'-phosphate. The resulting ammonia molecule is channeled to the active site of PdxS. The chain is Pyridoxal 5'-phosphate synthase subunit PdxT from Methanocorpusculum labreanum (strain ATCC 43576 / DSM 4855 / Z).